We begin with the raw amino-acid sequence, 180 residues long: MALREIIIVPDKQLRLTSKPVETVSPEVRKLADDMFETMYDAPGIGLAAIQIAEPVRLITMDLVRKEGNGKTEPRAFINPEIIGASTETRVYEEGCLSIPEYYAEVERPAQVRIRYTDLDGHVHEEDADGLFATCIQHEIDHLNGTLFIDHISRLKRALVMRKFEKAAKRGYKFVPAKTA.

Fe cation contacts are provided by C96 and H138. The active site involves E139. H142 provides a ligand contact to Fe cation.

The protein belongs to the polypeptide deformylase family. It depends on Fe(2+) as a cofactor.

The enzyme catalyses N-terminal N-formyl-L-methionyl-[peptide] + H2O = N-terminal L-methionyl-[peptide] + formate. Its function is as follows. Removes the formyl group from the N-terminal Met of newly synthesized proteins. Requires at least a dipeptide for an efficient rate of reaction. N-terminal L-methionine is a prerequisite for activity but the enzyme has broad specificity at other positions. The polypeptide is Peptide deformylase (Rhodopseudomonas palustris (strain BisA53)).